The primary structure comprises 69 residues: Sec-independent protein translocase protein TatA (69 aa).

The chain crosses the membrane as a helical span at residues methionine 1 to glycine 21. The tract at residues glutamate 49–glutamate 69 is disordered.

This sequence belongs to the TatA/E family. Forms a complex with TatC.

The protein localises to the cell inner membrane. Part of the twin-arginine translocation (Tat) system that transports large folded proteins containing a characteristic twin-arginine motif in their signal peptide across membranes. TatA could form the protein-conducting channel of the Tat system. This is Sec-independent protein translocase protein TatA from Chlorobium luteolum (strain DSM 273 / BCRC 81028 / 2530) (Pelodictyon luteolum).